The following is a 208-amino-acid chain: Large ribosomal subunit protein bL25 (208 aa).

The span at Pro-186 to Ala-201 shows a compositional bias: low complexity. The segment at Pro-186–Ala-208 is disordered.

It belongs to the bacterial ribosomal protein bL25 family. CTC subfamily. In terms of assembly, part of the 50S ribosomal subunit; part of the 5S rRNA/L5/L18/L25 subcomplex. Contacts the 5S rRNA. Binds to the 5S rRNA independently of L5 and L18.

Its function is as follows. This is one of the proteins that binds to the 5S RNA in the ribosome where it forms part of the central protuberance. The sequence is that of Large ribosomal subunit protein bL25 from Ralstonia pickettii (strain 12J).